The sequence spans 113 residues: Small ribosomal subunit protein bS6 (113 aa).

It belongs to the bacterial ribosomal protein bS6 family.

Its function is as follows. Binds together with bS18 to 16S ribosomal RNA. The protein is Small ribosomal subunit protein bS6 of Ruthia magnifica subsp. Calyptogena magnifica.